The primary structure comprises 153 residues: Small ribosomal subunit protein uS7c (153 aa).

Belongs to the universal ribosomal protein uS7 family. In terms of assembly, part of the 30S ribosomal subunit.

Its subcellular location is the plastid. In terms of biological role, one of the primary rRNA binding proteins, it binds directly to 16S rRNA where it nucleates assembly of the head domain of the 30S subunit. The protein is Small ribosomal subunit protein uS7c (rps7) of Helicosporidium sp. subsp. Simulium jonesii (Green alga).